The following is a 347-amino-acid chain: GTP 3',8-cyclase (347 aa).

The region spanning 12–242 (FRPFGVLRLS…QRIDARWPLR (231 aa)) is the Radical SAM core domain. A GTP-binding site is contributed by R19. 2 residues coordinate [4Fe-4S] cluster: C26 and C30. Y32 is a binding site for S-adenosyl-L-methionine. A [4Fe-4S] cluster-binding site is contributed by C33. R65 contacts GTP. Residue G69 coordinates S-adenosyl-L-methionine. A GTP-binding site is contributed by T104. S129 is an S-adenosyl-L-methionine binding site. K178 lines the GTP pocket. M212 serves as a coordination point for S-adenosyl-L-methionine. Residues C275 and C278 each coordinate [4Fe-4S] cluster. Residue 280–282 (RLR) coordinates GTP. A [4Fe-4S] cluster-binding site is contributed by C292.

This sequence belongs to the radical SAM superfamily. MoaA family. Monomer and homodimer. [4Fe-4S] cluster serves as cofactor.

It carries out the reaction GTP + AH2 + S-adenosyl-L-methionine = (8S)-3',8-cyclo-7,8-dihydroguanosine 5'-triphosphate + 5'-deoxyadenosine + L-methionine + A + H(+). Its pathway is cofactor biosynthesis; molybdopterin biosynthesis. In terms of biological role, catalyzes the cyclization of GTP to (8S)-3',8-cyclo-7,8-dihydroguanosine 5'-triphosphate. The polypeptide is GTP 3',8-cyclase (Synechococcus sp. (strain WH7803)).